A 283-amino-acid polypeptide reads, in one-letter code: Syntaxin VAM3 (283 aa).

The disordered stretch occupies residues 1–26 (MSFFDIEAQSSKGNSQQEPQFSTNQK). At 1–261 (MSFFDIEAQS…ADQHQRDRNK (261 aa)) the chain is on the cytoplasmic side. The span at 8-25 (AQSSKGNSQQEPQFSTNQ) shows a compositional bias: polar residues. Coiled-coil stretches lie at residues 28-48 (KELS…EKEC) and 84-111 (LIHQ…SYNQ). Disordered stretches follow at residues 116 to 146 (FPLK…DPES) and 162 to 182 (NEGQ…QGLS). Over residues 127-144 (SKERKDIHPRTEAVRQDP) the composition is skewed to basic and acidic residues. A coiled-coil region spans residues 169–189 (QLQEEQEQQQQGLSQEELDFQ). A t-SNARE coiled-coil homology domain is found at 190 to 252 (TIIHQERSQQ…QNANKQLTRA (63 aa)). The chain crosses the membrane as a helical; Anchor for type IV membrane protein span at residues 262-282 (CGKVTLIIIIVVCMVVLLAVL). Residue S283 is a topological domain, vacuolar.

It belongs to the syntaxin family. Associates with VAM7.

It is found in the vacuole membrane. In terms of biological role, required for vacuolar assembly. Provides the t-SNARE function in a late step of the vacuolar assembly. Required for homotypic vacuole membrane fusion, autophagy and fusion of biosynthetic transport vesicles with the vacuole. Required for the delivery of alpha-factor receptor-ligand complexes to the vacuole. The chain is Syntaxin VAM3 (VAM3) from Saccharomyces cerevisiae (strain ATCC 204508 / S288c) (Baker's yeast).